The sequence spans 257 residues: NAD-capped RNA hydrolase NudC (257 aa).

Arg69 contributes to the substrate binding site. 2 residues coordinate Zn(2+): Cys98 and Cys101. Residue Glu111 coordinates substrate. Residues Cys116 and Cys119 each contribute to the Zn(2+) site. Residue Tyr124 coordinates substrate. The region spanning 125–248 (PQIAPCIIVA…TVARRLIEDT (124 aa)) is the Nudix hydrolase domain. Residues Ala158, Glu174, and Glu178 each contribute to the a divalent metal cation site. Positions 159-180 (GFVEVGETLEQAVAREVMEESG) match the Nudix box motif. 192–199 (QPWPFPQS) contributes to the substrate binding site. Residue Glu219 participates in a divalent metal cation binding. Ala241 contributes to the substrate binding site.

It belongs to the Nudix hydrolase family. NudC subfamily. In terms of assembly, homodimer. Mg(2+) serves as cofactor. Mn(2+) is required as a cofactor. Requires Zn(2+) as cofactor.

It catalyses the reaction a 5'-end NAD(+)-phospho-ribonucleoside in mRNA + H2O = a 5'-end phospho-adenosine-phospho-ribonucleoside in mRNA + beta-nicotinamide D-ribonucleotide + 2 H(+). The catalysed reaction is NAD(+) + H2O = beta-nicotinamide D-ribonucleotide + AMP + 2 H(+). The enzyme catalyses NADH + H2O = reduced beta-nicotinamide D-ribonucleotide + AMP + 2 H(+). Its function is as follows. mRNA decapping enzyme that specifically removes the nicotinamide adenine dinucleotide (NAD) cap from a subset of mRNAs by hydrolyzing the diphosphate linkage to produce nicotinamide mononucleotide (NMN) and 5' monophosphate mRNA. The NAD-cap is present at the 5'-end of some mRNAs and stabilizes RNA against 5'-processing. Has preference for mRNAs with a 5'-end purine. Catalyzes the hydrolysis of a broad range of dinucleotide pyrophosphates. In Salmonella typhi, this protein is NAD-capped RNA hydrolase NudC.